A 21-amino-acid polypeptide reads, in one-letter code: 71 kDa F-actin-binding protein (21 aa).

To yeast fimbrin. The N-terminus is blocked.

Its function is as follows. Binds directly to F-actin and induces actin filament bundling. May function as a regulator of actin filament organization. This is 71 kDa F-actin-binding protein from Tetrahymena pyriformis.